The sequence spans 951 residues: Translation initiation factor IF-2 (951 aa).

Disordered regions lie at residues 58-255 (AERK…AVVI) and 305-329 (DVSR…KSLS). A compositionally biased stretch (low complexity) spans 101–170 (AEPQYAEPQQ…PQAQPAQPAA (70 aa)). Over residues 171-216 (PVAPPAPSAQPSAPQPPAAQPRPPQPPMPSRPPPAGYRPAPPPGAR) the composition is skewed to pro residues. Over residues 217–234 (PPMSAAPGAPAQPGAAGQ) the composition is skewed to low complexity. One can recognise a tr-type G domain in the interval 450–619 (IRPPVVTVMG…ALQSEVLELK (170 aa)). Residues 459–466 (GHVDHGKT) form a G1 region. 459–466 (GHVDHGKT) contacts GTP. The segment at 484-488 (GITQH) is G2. Positions 505–508 (DTPG) are G3. GTP is bound by residues 505 to 509 (DTPGH) and 559 to 562 (NKVD). The tract at residues 559-562 (NKVD) is G4. A G5 region spans residues 595–597 (SAR).

This sequence belongs to the TRAFAC class translation factor GTPase superfamily. Classic translation factor GTPase family. IF-2 subfamily.

Its subcellular location is the cytoplasm. Its function is as follows. One of the essential components for the initiation of protein synthesis. Protects formylmethionyl-tRNA from spontaneous hydrolysis and promotes its binding to the 30S ribosomal subunits. Also involved in the hydrolysis of GTP during the formation of the 70S ribosomal complex. This is Translation initiation factor IF-2 from Anaeromyxobacter dehalogenans (strain 2CP-1 / ATCC BAA-258).